We begin with the raw amino-acid sequence, 221 residues long: Serine/arginine-rich splicing factor 9 (221 aa).

RRM domains follow at residues 14-89 (GRIY…FPRT) and 111-187 (FRVL…PERS). Lys-36 is covalently cross-linked (Glycyl lysine isopeptide (Lys-Gly) (interchain with G-Cter in SUMO2)). Positions 188–200 (TSYGYSRSRSGSR) are interaction with SAFB1. Residue Ser-189 is modified to Phosphoserine. Low complexity predominate over residues 189-198 (SYGYSRSRSG). The segment at 189 to 221 (SYGYSRSRSGSRGRDSPYQSRGSPHYFSPFRPY) is disordered. At Tyr-192 the chain carries Phosphotyrosine. A phosphoserine mark is found at Ser-193, Ser-195, Ser-204, Ser-208, and Ser-211. Tyr-214 is modified (phosphotyrosine). At Ser-216 the chain carries Phosphoserine.

This sequence belongs to the splicing factor SR family. In terms of assembly, interacts with KHDRBS3. Interacts with HABP4. Interacts with NOL3/ARC/NOP30. Interacts with NSEP1/YB-1/YB1. Interacts with SAFB/SAFB1. Interacts with SRSF6/SFRS6. Interacts with TRA2B/SFRS10. Interacts with C1QBP. May also interact with DUSP11/PIR1. In terms of processing, extensively phosphorylated on serine residues in the RS domain. In terms of tissue distribution, expressed at high levels in the heart, kidney, pancreas and placenta, and at lower levels in the brain, liver, lung and skeletal muscle.

Its subcellular location is the nucleus. Its function is as follows. Plays a role in constitutive splicing and can modulate the selection of alternative splice sites. Represses the splicing of MAPT/Tau exon 10. In Homo sapiens (Human), this protein is Serine/arginine-rich splicing factor 9 (SRSF9).